Here is a 191-residue protein sequence, read N- to C-terminus: UPF0312 protein PA0423 (191 aa).

Residues 1–23 (MLKKTLAALALGSALFTAGQAMA) form the signal peptide.

This sequence belongs to the UPF0312 family. Type 1 subfamily.

It localises to the periplasm. The sequence is that of UPF0312 protein PA0423 from Pseudomonas aeruginosa (strain ATCC 15692 / DSM 22644 / CIP 104116 / JCM 14847 / LMG 12228 / 1C / PRS 101 / PAO1).